We begin with the raw amino-acid sequence, 298 residues long: tRNA pseudouridine synthase-like 1 (298 aa).

D60 acts as the Nucleophile in catalysis. A substrate-binding site is contributed by Y124.

Belongs to the tRNA pseudouridine synthase TruA family.

The catalysed reaction is a uridine in tRNA = a pseudouridine in tRNA. This is tRNA pseudouridine synthase-like 1 (pusl1) from Xenopus laevis (African clawed frog).